The following is a 380-amino-acid chain: Beta sliding clamp (380 aa).

This sequence belongs to the beta sliding clamp family. Forms a ring-shaped head-to-tail homodimer around DNA which binds and tethers DNA polymerases and other proteins to the DNA. The DNA replisome complex has a single clamp-loading complex (3 tau and 1 each of delta, delta', psi and chi subunits) which binds 3 Pol III cores (1 core on the leading strand and 2 on the lagging strand) each with a beta sliding clamp dimer. Additional proteins in the replisome are other copies of gamma, psi and chi, Ssb, DNA helicase and RNA primase.

It localises to the cytoplasm. Its function is as follows. Confers DNA tethering and processivity to DNA polymerases and other proteins. Acts as a clamp, forming a ring around DNA (a reaction catalyzed by the clamp-loading complex) which diffuses in an ATP-independent manner freely and bidirectionally along dsDNA. Initially characterized for its ability to contact the catalytic subunit of DNA polymerase III (Pol III), a complex, multichain enzyme responsible for most of the replicative synthesis in bacteria; Pol III exhibits 3'-5' exonuclease proofreading activity. The beta chain is required for initiation of replication as well as for processivity of DNA replication. This Mycoplasma genitalium (strain ATCC 33530 / DSM 19775 / NCTC 10195 / G37) (Mycoplasmoides genitalium) protein is Beta sliding clamp (dnaN).